Consider the following 132-residue polypeptide: Myelin P2 protein (132 aa).

N-acetylserine is present on serine 2. Arginine 107 provides a ligand contact to (9Z)-octadecenoate. Hexadecanoate is bound at residue arginine 107. A disulfide bond links cysteine 118 and cysteine 125. (9Z)-octadecenoate is bound at residue 127–129 (RIY). 127–129 (RIY) serves as a coordination point for hexadecanoate.

This sequence belongs to the calycin superfamily. Fatty-acid binding protein (FABP) family. As to quaternary structure, monomer. In terms of tissue distribution, detected in spinal cord (at protein level).

It is found in the cytoplasm. May play a role in lipid transport protein in Schwann cells. May bind cholesterol. The polypeptide is Myelin P2 protein (PMP2) (Equus caballus (Horse)).